Here is a 178-residue protein sequence, read N- to C-terminus: Small ribosomal subunit protein uS4 (178 aa).

The S4 RNA-binding domain occupies 104–166 (RRLQTIVYRK…PNSPMASENH (63 aa)). The segment at 158 to 178 (NSPMASENHPERTAAVSEENQ) is disordered.

This sequence belongs to the universal ribosomal protein uS4 family. Part of the 30S ribosomal subunit. Contacts protein S5. The interaction surface between S4 and S5 is involved in control of translational fidelity.

Its function is as follows. One of the primary rRNA binding proteins, it binds directly to 16S rRNA where it nucleates assembly of the body of the 30S subunit. With S5 and S12 plays an important role in translational accuracy. In Methanococcus maripaludis (strain C5 / ATCC BAA-1333), this protein is Small ribosomal subunit protein uS4.